We begin with the raw amino-acid sequence, 940 residues long: Lysine-specific demethylase 7A (940 aa).

A PHD-type zinc finger spans residues 37–88; sequence PVYCVCRQPYDVNRFMIECDVCKDWFHGSCVGVEEHHAVDIDLYHCPDCAAL. Positions 97–114 are linker; sequence RRNWHRHDYTEVDDGSKP. The 157-residue stretch at 230–386 folds into the JmjC domain; sequence FSDTKMSELV…MQLRCYEMEK (157 aa). Residue T279 coordinates substrate. Residues H282 and D284 each contribute to the Fe cation site. K299 contacts substrate. A Fe cation-binding site is contributed by H354. Disordered stretches follow at residues 483-509, 599-670, 710-729, 818-854, and 876-920; these read VKSQ…HSRR, LYTA…PDCT, SQKP…TSTS, NAQD…SSSI, and SPER…MATA. S604 is modified (phosphoserine). Over residues 613–623 the composition is skewed to polar residues; sequence TQNANMKTEQS. Over residues 714 to 724 the composition is skewed to basic and acidic residues; sequence SRQEIPVKREC.

It belongs to the JHDM1 histone demethylase family. JHDM1D subfamily. The cofactor is Fe(2+).

The protein localises to the nucleus. The enzyme catalyses N(6),N(6)-dimethyl-L-lysyl(9)-[histone H3] + 2 2-oxoglutarate + 2 O2 = L-lysyl(9)-[histone H3] + 2 formaldehyde + 2 succinate + 2 CO2. It catalyses the reaction N(6),N(6)-dimethyl-L-lysyl(27)-[histone H3] + 2 2-oxoglutarate + 2 O2 = L-lysyl(27)-[histone H3] + 2 formaldehyde + 2 succinate + 2 CO2. The catalysed reaction is N(6),N(6)-dimethyl-L-lysyl(36)-[histone H3] + 2-oxoglutarate + O2 = N(6)-methyl-L-lysyl(36)-[histone H3] + formaldehyde + succinate + CO2. It carries out the reaction N(6)-methyl-L-lysyl(20)-[histone H4] + 2-oxoglutarate + O2 = L-lysyl(20)-[histone H4] + formaldehyde + succinate + CO2. Functionally, histone demethylase required for brain development. Specifically demethylates dimethylated 'Lys-9', 'Lys-27' and 'Lys-36' (H3K9me2, H3K27me2, H3K36me2, respectively) of histone H3 and monomethylated histone H4 'Lys-20' residue (H4K20Me1), thereby playing a central role in histone code. Specifically binds trimethylated 'Lys-4' of histone H3 (H3K4me3), affecting histone demethylase specificity: in presence of H3K4me3, it has no demethylase activity toward H3K9me2, while it has high activity toward H3K27me2. Demethylates H3K9me2 in absence of H3K4me3. Has activity toward H4K20Me1 only when nucleosome is used as a substrate and when not histone octamer is used as substrate. The chain is Lysine-specific demethylase 7A (Kdm7a) from Mus musculus (Mouse).